The sequence spans 245 residues: Pathogenesis-related thaumatin-like protein 3.6 (245 aa).

Residues 1–19 (GSIPFWIALIASFSVFLQG) form the signal peptide. 8 cysteine pairs are disulfide-bonded: cysteine 33-cysteine 226, cysteine 74-cysteine 84, cysteine 89-cysteine 95, cysteine 142-cysteine 215, cysteine 148-cysteine 198, cysteine 156-cysteine 166, cysteine 170-cysteine 179, and cysteine 180-cysteine 185. A glycan (N-linked (GlcNAc...) asparagine) is linked at asparagine 90. Asparagine 186 carries N-linked (GlcNAc...) asparagine glycosylation.

It belongs to the thaumatin family. As to expression, mostly expressed in strobili, and, to a lower extent, in roots of seedlings and saplings.

In terms of biological role, may be involved in disease resistance. The polypeptide is Pathogenesis-related thaumatin-like protein 3.6 (Cryptomeria japonica (Japanese cedar)).